Reading from the N-terminus, the 340-residue chain is ATP-dependent 6-phosphofructokinase (340 aa).

ATP is bound at residue Gly11. Residue Arg21 to Arg25 coordinates ADP. ATP is bound by residues Arg72 to Tyr73 and Gly102 to Ser105. Asp103 serves as a coordination point for Mg(2+). Thr125–Asp127 is a binding site for substrate. Asp127 functions as the Proton acceptor in the catalytic mechanism. ADP is bound at residue Arg154. Substrate is bound by residues Arg162 and Met169–Arg171. ADP contacts are provided by residues Gly185 to Asp187, Lys211, and Lys213 to His215. Residues Glu222, Arg244, and His250–Arg253 contribute to the substrate site.

Belongs to the phosphofructokinase type A (PFKA) family. ATP-dependent PFK group I subfamily. Prokaryotic clade 'B1' sub-subfamily. Homotetramer. Mg(2+) is required as a cofactor.

Its subcellular location is the cytoplasm. It catalyses the reaction beta-D-fructose 6-phosphate + ATP = beta-D-fructose 1,6-bisphosphate + ADP + H(+). It functions in the pathway carbohydrate degradation; glycolysis; D-glyceraldehyde 3-phosphate and glycerone phosphate from D-glucose: step 3/4. With respect to regulation, allosterically activated by ADP and other diphosphonucleosides, and allosterically inhibited by phosphoenolpyruvate. Its function is as follows. Catalyzes the phosphorylation of D-fructose 6-phosphate to fructose 1,6-bisphosphate by ATP, the first committing step of glycolysis. This Lactococcus lactis subsp. lactis (Streptococcus lactis) protein is ATP-dependent 6-phosphofructokinase.